The primary structure comprises 376 residues: 23S rRNA (uracil(747)-C(5))-methyltransferase RlmC (376 aa).

Positions 3, 11, 14, and 87 each coordinate [4Fe-4S] cluster. Glutamine 212, phenylalanine 241, glutamate 262, and asparagine 307 together coordinate S-adenosyl-L-methionine. The active-site Nucleophile is the cysteine 334.

This sequence belongs to the class I-like SAM-binding methyltransferase superfamily. RNA M5U methyltransferase family. RlmC subfamily.

It catalyses the reaction uridine(747) in 23S rRNA + S-adenosyl-L-methionine = 5-methyluridine(747) in 23S rRNA + S-adenosyl-L-homocysteine + H(+). Functionally, catalyzes the formation of 5-methyl-uridine at position 747 (m5U747) in 23S rRNA. This is 23S rRNA (uracil(747)-C(5))-methyltransferase RlmC from Citrobacter koseri (strain ATCC BAA-895 / CDC 4225-83 / SGSC4696).